We begin with the raw amino-acid sequence, 370 residues long: Alpha-ketoglutarate-dependent xanthine dioxygenase xanA (370 aa).

Histidine 107 is a binding site for substrate. Residues histidine 149 and aspartate 151 each coordinate Fe cation. Residues threonine 195 and tryptophan 325 each coordinate 2-oxoglutarate. Position 340 (histidine 340) interacts with Fe cation. Position 352 (arginine 352) interacts with 2-oxoglutarate.

Belongs to the TfdA dioxygenase family. It depends on Fe(2+) as a cofactor. In terms of processing, glycosylated. Is subject to both N- and O-linked glycosylation. Phosphorylated.

It is found in the cytoplasm. It localises to the cytosol. It carries out the reaction xanthine + 2-oxoglutarate + O2 = urate + succinate + CO2. With respect to regulation, cu(2+) and Zn(2+) completely inhibit the xanthine dioxygenase activity, whereas Co(2+), Mn(2+), and Ni(2+) partially inhibit the activity. The inactive metal ions are presumed to compete for the Fe(2+)-binding site. N-oxalylglycine (NOG), a known inhibitor of several Fe(2+)/alpha-ketoglutarate-dependent dioxygenase family members, competes with alpha-ketoglutarate and provides a Ki of 0.12 uM for inhibition. 6,8-dihydroxypurine acts as a slow-binding competitive inhibitor. The thiol-specific inhibitors 5,5'-dithiobis(2-nitrobenzoic acid) (DTNB) and iodoacetamide, inhibit also the catalytic activity. Its function is as follows. Alpha-ketoglutarate-dependent xanthine dioxygenase is a non-heme mononuclear Fe(2+) enzyme that decarboxylates alpha-ketoglutarate to succinate and CO(2) while hydroxylating xanthine to generate uric acid. Allows xanthine utilization as a nitrogen source. Whereas xanA is highly specific for xanthine, alpha-ketoadipic acid can replace alpha-ketoglutarate as a cosubstrate. Exhibits ferroxidase activity in the absence of substrates. The chain is Alpha-ketoglutarate-dependent xanthine dioxygenase xanA from Emericella nidulans (Aspergillus nidulans).